A 305-amino-acid polypeptide reads, in one-letter code: Lipoyl synthase (305 aa).

Residues Cys41, Cys46, Cys52, Cys68, Cys72, Cys75, and Ser281 each contribute to the [4Fe-4S] cluster site. The 217-residue stretch at 54 to 270 (GARRTATFMI…RKVAMDKGFK (217 aa)) folds into the Radical SAM core domain. The span at 283 to 298 (HADEQVNEAAKEKQRQ) shows a compositional bias: basic and acidic residues. Residues 283–305 (HADEQVNEAAKEKQRQGEAQLNS) are disordered.

It belongs to the radical SAM superfamily. Lipoyl synthase family. It depends on [4Fe-4S] cluster as a cofactor.

Its subcellular location is the cytoplasm. The enzyme catalyses [[Fe-S] cluster scaffold protein carrying a second [4Fe-4S](2+) cluster] + N(6)-octanoyl-L-lysyl-[protein] + 2 oxidized [2Fe-2S]-[ferredoxin] + 2 S-adenosyl-L-methionine + 4 H(+) = [[Fe-S] cluster scaffold protein] + N(6)-[(R)-dihydrolipoyl]-L-lysyl-[protein] + 4 Fe(3+) + 2 hydrogen sulfide + 2 5'-deoxyadenosine + 2 L-methionine + 2 reduced [2Fe-2S]-[ferredoxin]. It functions in the pathway protein modification; protein lipoylation via endogenous pathway; protein N(6)-(lipoyl)lysine from octanoyl-[acyl-carrier-protein]. Its function is as follows. Catalyzes the radical-mediated insertion of two sulfur atoms into the C-6 and C-8 positions of the octanoyl moiety bound to the lipoyl domains of lipoate-dependent enzymes, thereby converting the octanoylated domains into lipoylated derivatives. This is Lipoyl synthase from Staphylococcus aureus (strain bovine RF122 / ET3-1).